The sequence spans 239 residues: Transcriptional activatory protein AadR (239 aa).

Residue 27–149 coordinates a nucleoside 3',5'-cyclic phosphate; sequence ICGELGPADH…FATRELSLAQ (123 aa). The HTH crp-type domain maps to 158 to 231; the sequence is RSAEEKVAAF…PDGVRVLDPK (74 aa). Residues 191–210 constitute a DNA-binding region (H-T-H motif); that stretch reads RQDIADFLGLTIETVSRTFT.

Functionally, transcriptional activator of anaerobic gene expression. For aromatic acid degradation. Also required for the anaerobic degradation of benzoate. The polypeptide is Transcriptional activatory protein AadR (aadR) (Rhodopseudomonas palustris (strain ATCC BAA-98 / CGA009)).